The following is a 283-amino-acid chain: Pantothenate synthetase (283 aa).

30–37 contributes to the ATP binding site; the sequence is MGNLHDGH. Residue His37 is the Proton donor of the active site. A (R)-pantoate-binding site is contributed by Gln61. Gln61 is a beta-alanine binding site. 149-152 contributes to the ATP binding site; it reads GEKD. Gln155 lines the (R)-pantoate pocket. ATP is bound at residue 186–189; sequence LSSR.

It belongs to the pantothenate synthetase family. In terms of assembly, homodimer.

The protein resides in the cytoplasm. It catalyses the reaction (R)-pantoate + beta-alanine + ATP = (R)-pantothenate + AMP + diphosphate + H(+). It functions in the pathway cofactor biosynthesis; (R)-pantothenate biosynthesis; (R)-pantothenate from (R)-pantoate and beta-alanine: step 1/1. In terms of biological role, catalyzes the condensation of pantoate with beta-alanine in an ATP-dependent reaction via a pantoyl-adenylate intermediate. The sequence is that of Pantothenate synthetase from Shigella dysenteriae serotype 1 (strain Sd197).